A 375-amino-acid polypeptide reads, in one-letter code: DNA replication and repair protein RecF (375 aa).

An ATP-binding site is contributed by 30 to 37 (GENAQGKT).

This sequence belongs to the RecF family.

Its subcellular location is the cytoplasm. Functionally, the RecF protein is involved in DNA metabolism; it is required for DNA replication and normal SOS inducibility. RecF binds preferentially to single-stranded, linear DNA. It also seems to bind ATP. The chain is DNA replication and repair protein RecF from Bacillus anthracis (strain A0248).